Here is a 1863-residue protein sequence, read N- to C-terminus: Calcineurin-binding protein 1 (1863 aa).

3 TPR repeats span residues 30 to 65 (LSQTYHDGLLKLQAKDYDKARELLESILKDPIITNS), 81 to 116 (FLALKNLATVFLELGSSHYENALNCYLQAIDLDAKD), and 118 to 150 (VLWNHLGTLSCSMGLLSISRWAFEQGLLCSPNN). The disordered stretch occupies residues 315-361 (ERESGGSVKEKEPVFSEEHPQERRSTRLERLRNQKPEKEGLEFDNSK). TPR repeat units lie at residues 543-576 (ARYFWLSARLSILEDNKAKALEEYLRCLSLLGRE), 602-637 (IHEINLLKIDFLLENNIPEMMEKEFYSECVNLLAPL), 866-900 (INSPDGLGHDMGLPDKLCRNEVKSFLEEVHVEKNE), 955-988 (QCFFCLYGLNLRVDGSYEDELAVHKNTSRGDYQT), 990-1009 (EQCVDVFQYILPYAKASSRT), 1011-1031 (LVKLRRVLRAIKKHFSQPPDD), 1143-1183 (FESW…SQRV), 1226-1263 (VPFYDQRSVLPSKDATWTRFCENSMKHFNKAFSHRQDW), 1264-1297 (SHAFYMGKLSEKLGHSYEISLSYYKQAMTLNPSA), 1306-1339 (ASRLKLLNACGKQNLEALKVLASYCFDESIKDTA), 1377-1412 (EGVWHMLYNDSLSALGICVEGDLKHFHKARYMLAQG), and 1508-1541 (NSLRSDKRFSLCVEDLVPVAIGRYVKALVSSMSR). Residues 894-923 (VHVEKNENNKTESKKDGSEEQVGYREKEQS) are compositionally biased toward basic and acidic residues. A disordered region spans residues 894–941 (VHVEKNENNKTESKKDGSEEQVGYREKEQSEQQSKQIPEHTEEVAEEE). Positions 1813-1840 (KMKRGASTSSVVPSVQSGGTSEPEPAPK) are disordered. The segment covering 1818–1832 (ASTSSVVPSVQSGGT) has biased composition (polar residues).

As to quaternary structure, component of the HIRA complex made of UBN1, UBN2, ASF1A, CABIN1 and HIRA. In terms of tissue distribution, expressed at low levels in seedlings.

Its subcellular location is the nucleus. Its function is as follows. May be required for replication-independent chromatin assembly. The protein is Calcineurin-binding protein 1 of Arabidopsis thaliana (Mouse-ear cress).